A 282-amino-acid chain; its full sequence is Release factor glutamine methyltransferase (282 aa).

Residues 120 to 124 (GVGSG), Asp143, and Asn189 contribute to the S-adenosyl-L-methionine site. 189-192 (NPPY) is a substrate binding site.

This sequence belongs to the protein N5-glutamine methyltransferase family. PrmC subfamily.

It catalyses the reaction L-glutaminyl-[peptide chain release factor] + S-adenosyl-L-methionine = N(5)-methyl-L-glutaminyl-[peptide chain release factor] + S-adenosyl-L-homocysteine + H(+). In terms of biological role, methylates the class 1 translation termination release factors RF1/PrfA and RF2/PrfB on the glutamine residue of the universally conserved GGQ motif. The chain is Release factor glutamine methyltransferase from Dictyoglomus turgidum (strain DSM 6724 / Z-1310).